Here is a 164-residue protein sequence, read N- to C-terminus: Phosphopantetheine adenylyltransferase (164 aa).

S9 is a substrate binding site. ATP-binding positions include S9–F10 and H17. Residues K41, A78, and R92 each coordinate substrate. ATP-binding positions include G93–R95, E103, and S128–T134.

Belongs to the bacterial CoaD family. As to quaternary structure, homohexamer. The cofactor is Mg(2+).

Its subcellular location is the cytoplasm. The enzyme catalyses (R)-4'-phosphopantetheine + ATP + H(+) = 3'-dephospho-CoA + diphosphate. The protein operates within cofactor biosynthesis; coenzyme A biosynthesis; CoA from (R)-pantothenate: step 4/5. Its function is as follows. Reversibly transfers an adenylyl group from ATP to 4'-phosphopantetheine, yielding dephospho-CoA (dPCoA) and pyrophosphate. This chain is Phosphopantetheine adenylyltransferase, found in Allorhizobium ampelinum (strain ATCC BAA-846 / DSM 112012 / S4) (Agrobacterium vitis (strain S4)).